Here is a 396-residue protein sequence, read N- to C-terminus: Succinyl-CoA:mesaconate CoA-transferase (396 aa).

The active-site Nucleophile is D175.

Belongs to the CoA-transferase III family.

The catalysed reaction is mesaconate + succinyl-CoA = 2-methylfumaryl-CoA + succinate. Involved in the methylaspartate cycle. Catalyzes the transfer of the CoA moiety from succinyl-CoA to mesaconate to generate mesaconyl-CoA (2-methylfumaryl-CoA) and succinate. The protein is Succinyl-CoA:mesaconate CoA-transferase of Haloarcula marismortui (strain ATCC 43049 / DSM 3752 / JCM 8966 / VKM B-1809) (Halobacterium marismortui).